The sequence spans 206 residues: Large ribosomal subunit protein uL13z (206 aa).

Belongs to the universal ribosomal protein uL13 family.

The chain is Large ribosomal subunit protein uL13z (RPL13AA) from Arabidopsis thaliana (Mouse-ear cress).